Reading from the N-terminus, the 172-residue chain is Protein-export protein SecB (172 aa).

This sequence belongs to the SecB family. As to quaternary structure, homotetramer, a dimer of dimers. One homotetramer interacts with 1 SecA dimer.

It is found in the cytoplasm. Functionally, one of the proteins required for the normal export of preproteins out of the cell cytoplasm. It is a molecular chaperone that binds to a subset of precursor proteins, maintaining them in a translocation-competent state. It also specifically binds to its receptor SecA. This is Protein-export protein SecB from Ralstonia pickettii (strain 12J).